We begin with the raw amino-acid sequence, 486 residues long: Argininosuccinate lyase (486 aa).

It belongs to the lyase 1 family. Argininosuccinate lyase subfamily.

It is found in the cytoplasm. It catalyses the reaction 2-(N(omega)-L-arginino)succinate = fumarate + L-arginine. It participates in amino-acid biosynthesis; L-arginine biosynthesis; L-arginine from L-ornithine and carbamoyl phosphate: step 3/3. In Acidovorax ebreus (strain TPSY) (Diaphorobacter sp. (strain TPSY)), this protein is Argininosuccinate lyase.